The primary structure comprises 87 residues: Small ribosomal subunit protein uS15 (87 aa).

It belongs to the universal ribosomal protein uS15 family. Part of the 30S ribosomal subunit. Forms a bridge to the 50S subunit in the 70S ribosome, contacting the 23S rRNA.

One of the primary rRNA binding proteins, it binds directly to 16S rRNA where it helps nucleate assembly of the platform of the 30S subunit by binding and bridging several RNA helices of the 16S rRNA. Functionally, forms an intersubunit bridge (bridge B4) with the 23S rRNA of the 50S subunit in the ribosome. In Dehalococcoides mccartyi (strain ATCC BAA-2266 / KCTC 15142 / 195) (Dehalococcoides ethenogenes (strain 195)), this protein is Small ribosomal subunit protein uS15.